The primary structure comprises 212 residues: Probable GTP-binding protein EngB (212 aa).

Positions 22–212 constitute an EngB-type G domain; sequence GVSEFAFFGR…NILSLIAKRI (191 aa). GTP-binding positions include 30 to 37, 57 to 61, 95 to 98, 162 to 165, and 192 to 195; these read GRSNAGKS, GMTRE, DLPG, TKAD, and ISSA. Mg(2+) is bound by residues Ser37 and Thr59.

It belongs to the TRAFAC class TrmE-Era-EngA-EngB-Septin-like GTPase superfamily. EngB GTPase family. The cofactor is Mg(2+).

Functionally, necessary for normal cell division and for the maintenance of normal septation. This Treponema denticola (strain ATCC 35405 / DSM 14222 / CIP 103919 / JCM 8153 / KCTC 15104) protein is Probable GTP-binding protein EngB.